Reading from the N-terminus, the 311-residue chain is tRNA-cytidine(32) 2-sulfurtransferase (311 aa).

Positions 47–52 match the PP-loop motif motif; it reads SGGKDS. Cysteine 122, cysteine 125, and cysteine 213 together coordinate [4Fe-4S] cluster.

Belongs to the TtcA family. Homodimer. Requires Mg(2+) as cofactor. [4Fe-4S] cluster is required as a cofactor.

It localises to the cytoplasm. It carries out the reaction cytidine(32) in tRNA + S-sulfanyl-L-cysteinyl-[cysteine desulfurase] + AH2 + ATP = 2-thiocytidine(32) in tRNA + L-cysteinyl-[cysteine desulfurase] + A + AMP + diphosphate + H(+). Its pathway is tRNA modification. Its function is as follows. Catalyzes the ATP-dependent 2-thiolation of cytidine in position 32 of tRNA, to form 2-thiocytidine (s(2)C32). The sulfur atoms are provided by the cysteine/cysteine desulfurase (IscS) system. The sequence is that of tRNA-cytidine(32) 2-sulfurtransferase from Shigella dysenteriae serotype 1 (strain Sd197).